We begin with the raw amino-acid sequence, 492 residues long: Adenosylhomocysteinase-like 2 (492 aa).

Residues 43 to 64 (FTGSSDEEDVSPKDNHQRNSAG) are disordered. Substrate is bound by residues D192 and E217. 218–220 (SVT) is an NAD(+) binding site. Positions 247 and 251 each coordinate substrate. NAD(+)-binding positions include 283–288 (GDVGKG), E304, 360–362 (MGH), N407, K486, 486–490 (KANYY), and Y490.

This sequence belongs to the adenosylhomocysteinase family. Requires NAD(+) as cofactor.

Its function is as follows. Might play a role in the regulation of methionine metabolism. The chain is Adenosylhomocysteinase-like 2 from Drosophila melanogaster (Fruit fly).